We begin with the raw amino-acid sequence, 126 residues long: Aspartate 1-decarboxylase (126 aa).

Residue Ser25 is the Schiff-base intermediate with substrate; via pyruvic acid of the active site. At Ser25 the chain carries Pyruvic acid (Ser). Thr57 contacts substrate. The active-site Proton donor is Tyr58. 73-75 (GAA) provides a ligand contact to substrate.

Belongs to the PanD family. In terms of assembly, heterooctamer of four alpha and four beta subunits. Requires pyruvate as cofactor. In terms of processing, is synthesized initially as an inactive proenzyme, which is activated by self-cleavage at a specific serine bond to produce a beta-subunit with a hydroxyl group at its C-terminus and an alpha-subunit with a pyruvoyl group at its N-terminus.

The protein resides in the cytoplasm. It carries out the reaction L-aspartate + H(+) = beta-alanine + CO2. It participates in cofactor biosynthesis; (R)-pantothenate biosynthesis; beta-alanine from L-aspartate: step 1/1. In terms of biological role, catalyzes the pyruvoyl-dependent decarboxylation of aspartate to produce beta-alanine. The chain is Aspartate 1-decarboxylase from Methylobacillus flagellatus (strain ATCC 51484 / DSM 6875 / VKM B-1610 / KT).